An 874-amino-acid chain; its full sequence is DNA mismatch repair protein MutS (874 aa).

Position 630 to 637 (630 to 637 (GPNMAGKS)) interacts with ATP.

It belongs to the DNA mismatch repair MutS family.

In terms of biological role, this protein is involved in the repair of mismatches in DNA. It is possible that it carries out the mismatch recognition step. This protein has a weak ATPase activity. This is DNA mismatch repair protein MutS from Chlorobium phaeovibrioides (strain DSM 265 / 1930) (Prosthecochloris vibrioformis (strain DSM 265)).